We begin with the raw amino-acid sequence, 199 residues long: FMN-dependent NADH:quinone oxidoreductase (199 aa).

FMN-binding positions include S10, 16–18, and 96–99; these read SVS and MYNF.

It belongs to the azoreductase type 1 family. Homodimer. FMN is required as a cofactor.

The catalysed reaction is 2 a quinone + NADH + H(+) = 2 a 1,4-benzosemiquinone + NAD(+). The enzyme catalyses N,N-dimethyl-1,4-phenylenediamine + anthranilate + 2 NAD(+) = 2-(4-dimethylaminophenyl)diazenylbenzoate + 2 NADH + 2 H(+). Its function is as follows. Quinone reductase that provides resistance to thiol-specific stress caused by electrophilic quinones. Functionally, also exhibits azoreductase activity. Catalyzes the reductive cleavage of the azo bond in aromatic azo compounds to the corresponding amines. The chain is FMN-dependent NADH:quinone oxidoreductase from Azotobacter vinelandii (strain DJ / ATCC BAA-1303).